The following is a 280-amino-acid chain: Ribosomal protein L11 methyltransferase (280 aa).

Positions 131, 152, 174, and 217 each coordinate S-adenosyl-L-methionine.

Belongs to the methyltransferase superfamily. PrmA family.

The protein resides in the cytoplasm. It carries out the reaction L-lysyl-[protein] + 3 S-adenosyl-L-methionine = N(6),N(6),N(6)-trimethyl-L-lysyl-[protein] + 3 S-adenosyl-L-homocysteine + 3 H(+). Its function is as follows. Methylates ribosomal protein L11. The polypeptide is Ribosomal protein L11 methyltransferase (Bacteroides thetaiotaomicron (strain ATCC 29148 / DSM 2079 / JCM 5827 / CCUG 10774 / NCTC 10582 / VPI-5482 / E50)).